A 142-amino-acid chain; its full sequence is Large ribosomal subunit protein uL13 (142 aa).

This sequence belongs to the universal ribosomal protein uL13 family. Part of the 50S ribosomal subunit.

Functionally, this protein is one of the early assembly proteins of the 50S ribosomal subunit, although it is not seen to bind rRNA by itself. It is important during the early stages of 50S assembly. In Photorhabdus laumondii subsp. laumondii (strain DSM 15139 / CIP 105565 / TT01) (Photorhabdus luminescens subsp. laumondii), this protein is Large ribosomal subunit protein uL13.